The sequence spans 429 residues: 3-phosphoshikimate 1-carboxyvinyltransferase (429 aa).

3-phosphoshikimate-binding residues include lysine 23, serine 24, and arginine 28. Phosphoenolpyruvate is bound at residue lysine 23. Phosphoenolpyruvate-binding residues include glycine 97 and arginine 125. 3-phosphoshikimate-binding residues include serine 170, serine 171, glutamine 172, serine 198, aspartate 314, asparagine 338, and lysine 342. Residue glutamine 172 coordinates phosphoenolpyruvate. The active-site Proton acceptor is aspartate 314. Phosphoenolpyruvate contacts are provided by arginine 346, arginine 388, and lysine 413.

It belongs to the EPSP synthase family. In terms of assembly, monomer.

The protein resides in the cytoplasm. It catalyses the reaction 3-phosphoshikimate + phosphoenolpyruvate = 5-O-(1-carboxyvinyl)-3-phosphoshikimate + phosphate. Its pathway is metabolic intermediate biosynthesis; chorismate biosynthesis; chorismate from D-erythrose 4-phosphate and phosphoenolpyruvate: step 6/7. In terms of biological role, catalyzes the transfer of the enolpyruvyl moiety of phosphoenolpyruvate (PEP) to the 5-hydroxyl of shikimate-3-phosphate (S3P) to produce enolpyruvyl shikimate-3-phosphate and inorganic phosphate. This chain is 3-phosphoshikimate 1-carboxyvinyltransferase, found in Pectobacterium carotovorum subsp. carotovorum (strain PC1).